A 231-amino-acid chain; its full sequence is Flagellar L-ring protein 2 (231 aa).

Positions 1–15 are cleaved as a signal peptide; sequence MKNLILILPLLMLTG. Residue C16 is the site of N-palmitoyl cysteine attachment. C16 carries S-diacylglycerol cysteine lipidation. Residues 30 to 54 form a disordered region; it reads SPVGSGLRTQADPIPVTPRMRTPVS.

This sequence belongs to the FlgH family. In terms of assembly, the basal body constitutes a major portion of the flagellar organelle and consists of four rings (L,P,S, and M) mounted on a central rod.

It is found in the cell outer membrane. Its subcellular location is the bacterial flagellum basal body. In terms of biological role, assembles around the rod to form the L-ring and probably protects the motor/basal body from shearing forces during rotation. This chain is Flagellar L-ring protein 2, found in Bradyrhizobium diazoefficiens (strain JCM 10833 / BCRC 13528 / IAM 13628 / NBRC 14792 / USDA 110).